Consider the following 1185-residue polypeptide: 205 kDa microtubule-associated protein (1185 aa).

Positions 146–159 (EPNQLPEQLQQQQQ) are enriched in low complexity. Residues 146–196 (EPNQLPEQLQQQQQIESQGVHEDPRQEDEDEHSSVATTYGTSSLSENNSSP) form a disordered region. Polar residues predominate over residues 179-196 (SVATTYGTSSLSENNSSP). Phosphoserine is present on residues S354 and S448. Y450 is subject to Phosphotyrosine. 3 positions are modified to phosphoserine: S709, S710, and S712. T721 bears the Phosphothreonine mark. Residue S728 is modified to Phosphoserine. Positions 745–977 (TAADGQSISQ…ASTKVRPAAT (233 aa)) are microtubule-binding. Residues 856-866 (SIATKTSTTSS) show a composition bias toward low complexity. Disordered regions lie at residues 856–1035 (SIAT…TSTA) and 1054–1114 (SASL…SSPA). Polar residues-rich tracts occupy residues 867–881 (LTGN…NVGS) and 908–936 (TITN…STNA). S874 carries the phosphoserine modification. The span at 940 to 952 (ATSGTGSVASSTA) shows a compositional bias: low complexity. Over residues 989–999 (PRSTISSTTTV) the composition is skewed to polar residues. The segment covering 1003–1015 (PSTSTPSFSTRSP) has biased composition (low complexity). Polar residues-rich tracts occupy residues 1016–1026 (NKQQSNGLGKN) and 1054–1066 (SASL…STSR). Residues S1075 and S1086 each carry the phosphoserine modification. Polar residues predominate over residues 1100–1111 (LTPQSKDGTAKS). S1121 carries the phosphoserine modification.

The protein resides in the cytoplasm. The protein localises to the cytoskeleton. It is found in the spindle. Functionally, may play an important role in the regulation of microtubule assembly and interaction. The polypeptide is 205 kDa microtubule-associated protein (Map205) (Drosophila melanogaster (Fruit fly)).